The chain runs to 205 residues: N-(5'-phosphoribosyl)anthranilate isomerase (205 aa).

This sequence belongs to the TrpF family.

It carries out the reaction N-(5-phospho-beta-D-ribosyl)anthranilate = 1-(2-carboxyphenylamino)-1-deoxy-D-ribulose 5-phosphate. The protein operates within amino-acid biosynthesis; L-tryptophan biosynthesis; L-tryptophan from chorismate: step 3/5. The chain is N-(5'-phosphoribosyl)anthranilate isomerase from Marinomonas sp. (strain MWYL1).